Reading from the N-terminus, the 101-residue chain is Urease subunit beta (101 aa).

Belongs to the urease beta subunit family. Heterotrimer of UreA (gamma), UreB (beta) and UreC (alpha) subunits. Three heterotrimers associate to form the active enzyme.

It localises to the cytoplasm. The enzyme catalyses urea + 2 H2O + H(+) = hydrogencarbonate + 2 NH4(+). It participates in nitrogen metabolism; urea degradation; CO(2) and NH(3) from urea (urease route): step 1/1. This chain is Urease subunit beta, found in Rhizobium johnstonii (strain DSM 114642 / LMG 32736 / 3841) (Rhizobium leguminosarum bv. viciae).